Reading from the N-terminus, the 547-residue chain is Nitrate transporter 2.1 (547 aa).

The next 12 helical transmembrane spans lie at 53–73 (WICF…APII), 86–106 (NAGV…GIVV), 113–133 (YGAA…ALVT), 143–163 (FFIG…GTMF), 173–193 (AIAA…MPLI), 211–231 (AFFV…LLGI), 262–280 (LGNY…SFGV), 296–316 (FGLN…MNLF), 338–358 (IWAL…LGKV), 366–386 (IVIM…HFGI), 400–420 (GLVG…WFAG), and 433–453 (GFVY…FIWF).

Belongs to the major facilitator superfamily. Nitrate/nitrite porter (TC 2.A.1.8) family.

The protein resides in the cell membrane. Its activity is regulated as follows. Nitrite transport mediated by system 1 is very sensitive to inhibition by nitrate. In terms of biological role, involved in nitrate transport, but does not seem to be able to mediate transport by its own. Acts as a dual component transporter with NAR2 (system 1). Imports nitrate with high affinity when expressed with NAR2 in a heterologous system (Xenopus oocytes). Involved in a high affinity and a high capacity transport specific for both nitrate and nitrite. The sequence is that of Nitrate transporter 2.1 from Chlamydomonas reinhardtii (Chlamydomonas smithii).